Reading from the N-terminus, the 60-residue chain is RYIELAVVADHGMFTKYRVHELVNTVNGFFRSKQDLIKVQKDKTLTSFGEWRERDLLPRI.

A Peptidase M12B domain is found at 1–60 (RYIELAVVADHGMFTKYRVHELVNTVNGFFRSKQDLIKVQKDKTLTSFGEWRERDLLPRI). Residue Glu-4 coordinates Ca(2+).

It belongs to the venom metalloproteinase (M12B) family. P-I subfamily. In terms of assembly, monomer. The cofactor is Zn(2+). In terms of tissue distribution, expressed by the venom gland.

The protein localises to the secreted. Completely inhibited by EDTA and EGTA. Partially inhibited by serine proteinase inhibitors PMSF and benzamidine. Not inhibited by cysteine proteinase inhibitors mercury ions and E-64. Is active without cofactors, although the presence of low concentrations of calcium and zinc ions enhanced its ability to convert prothrombin (F2) into active thrombin. Its function is as follows. Prothrombin (F2) activator that is cofactor-independent. Also has fibrinolytic and fibrinogenolytic activity. It degrades the Aalpha-chain and more slowly the Bbeta-chain of fibrin and fibrinogen, while the gamma-chain is only partially and slowly affected. A dose-dependent procoagulant activity is shown in human plasma. This Bothrops jararaca (Jararaca) protein is Snake venom metalloproteinase bothrojaractivase.